Here is a 183-residue protein sequence, read N- to C-terminus: Ribosome-recycling factor (183 aa).

This sequence belongs to the RRF family.

The protein localises to the cytoplasm. In terms of biological role, responsible for the release of ribosomes from messenger RNA at the termination of protein biosynthesis. May increase the efficiency of translation by recycling ribosomes from one round of translation to another. The protein is Ribosome-recycling factor of Treponema pallidum (strain Nichols).